A 398-amino-acid polypeptide reads, in one-letter code: Ethanolaminephosphotransferase 1 (398 aa).

Position 2 is an N-acetylalanine (Ala2). A run of 10 helical transmembrane segments spans residues 47-69 (WLAP…LLLT), 84-103 (HVPD…AYTL), 123-145 (LFDH…SIFG), 150-172 (GVSV…LSHW), 179-201 (VLFL…IVTA), 221-243 (LFTA…LNFF), 256-278 (VYEA…VWIL), 291-310 (IFYF…LIVC), 319-341 (TLNW…AATS), and 345-367 (SALL…VQVV). Position 388 (Sec388) is a non-standard amino acid, selenocysteine.

This sequence belongs to the CDP-alcohol phosphatidyltransferase class-I family. Mg(2+) serves as cofactor. Mn(2+) is required as a cofactor.

Its subcellular location is the endoplasmic reticulum membrane. The enzyme catalyses CDP-ethanolamine + a 1,2-diacyl-sn-glycerol = a 1,2-diacyl-sn-glycero-3-phosphoethanolamine + CMP + H(+). It catalyses the reaction 1-O-alkyl-2-acyl-sn-glycerol + CDP-ethanolamine = a 1-O-alkyl-2-acyl-sn-glycero-3-phosphoethanolamine + CMP + H(+). Its pathway is phospholipid metabolism; phosphatidylethanolamine biosynthesis; phosphatidylethanolamine from ethanolamine: step 3/3. Its function is as follows. Ethanolaminephosphotransferase that catalyzes the transfer of phosphoethanolamine (PE) from CDP-ethanolamine to lipid acceptors, the final step in the synthesis of PE via the 'Kennedy' pathway. PE is the second most abundant phospholipid of membranes in mammals and is involved in various membrane-related cellular processes. The enzyme is critical for the synthesis of several PE species and also catalyzes the synthesis of plasmanyl-PE, a lipid required for proper myelination and neurodevelopment, from 1-alkyl-2-acylglycerol. The protein is Ethanolaminephosphotransferase 1 of Mus musculus (Mouse).